Consider the following 349-residue polypeptide: S-adenosylmethionine:tRNA ribosyltransferase-isomerase (349 aa).

Belongs to the QueA family. In terms of assembly, monomer.

It localises to the cytoplasm. It catalyses the reaction 7-aminomethyl-7-carbaguanosine(34) in tRNA + S-adenosyl-L-methionine = epoxyqueuosine(34) in tRNA + adenine + L-methionine + 2 H(+). Its pathway is tRNA modification; tRNA-queuosine biosynthesis. Its function is as follows. Transfers and isomerizes the ribose moiety from AdoMet to the 7-aminomethyl group of 7-deazaguanine (preQ1-tRNA) to give epoxyqueuosine (oQ-tRNA). This is S-adenosylmethionine:tRNA ribosyltransferase-isomerase from Pseudomonas putida (strain ATCC 700007 / DSM 6899 / JCM 31910 / BCRC 17059 / LMG 24140 / F1).